The following is a 235-amino-acid chain: Ubiquinone/menaquinone biosynthesis C-methyltransferase UbiE (235 aa).

S-adenosyl-L-methionine contacts are provided by Thr-59, Asp-84, and Ser-123.

This sequence belongs to the class I-like SAM-binding methyltransferase superfamily. MenG/UbiE family.

The enzyme catalyses a 2-demethylmenaquinol + S-adenosyl-L-methionine = a menaquinol + S-adenosyl-L-homocysteine + H(+). The catalysed reaction is a 2-methoxy-6-(all-trans-polyprenyl)benzene-1,4-diol + S-adenosyl-L-methionine = a 5-methoxy-2-methyl-3-(all-trans-polyprenyl)benzene-1,4-diol + S-adenosyl-L-homocysteine + H(+). It functions in the pathway quinol/quinone metabolism; menaquinone biosynthesis; menaquinol from 1,4-dihydroxy-2-naphthoate: step 2/2. Its pathway is cofactor biosynthesis; ubiquinone biosynthesis. Its function is as follows. Methyltransferase required for the conversion of demethylmenaquinol (DMKH2) to menaquinol (MKH2) and the conversion of 2-polyprenyl-6-methoxy-1,4-benzoquinol (DDMQH2) to 2-polyprenyl-3-methyl-6-methoxy-1,4-benzoquinol (DMQH2). This is Ubiquinone/menaquinone biosynthesis C-methyltransferase UbiE from Campylobacter jejuni subsp. jejuni serotype O:2 (strain ATCC 700819 / NCTC 11168).